Here is a 128-residue protein sequence, read N- to C-terminus: Cytochrome b (128 aa).

The next 3 helical transmembrane spans lie at 25–45 (FGSM…FLAI), 69–90 (WIMQ…YIHI), and 105–125 (WLSG…XMCY). Heme b-binding residues include H75 and H89. H126 is an a ubiquinone binding site.

This sequence belongs to the cytochrome b family. As to quaternary structure, the cytochrome bc1 complex contains 3 respiratory subunits (MT-CYB, CYC1 and UQCRFS1), 2 core proteins (UQCRC1 and UQCRC2) and probably 6 low-molecular weight proteins. It depends on heme b as a cofactor.

Its subcellular location is the mitochondrion inner membrane. Its function is as follows. Component of the ubiquinol-cytochrome c reductase complex (complex III or cytochrome b-c1 complex) that is part of the mitochondrial respiratory chain. The b-c1 complex mediates electron transfer from ubiquinol to cytochrome c. Contributes to the generation of a proton gradient across the mitochondrial membrane that is then used for ATP synthesis. The polypeptide is Cytochrome b (MT-CYB) (Crotalus viridis viridis (Prairie rattlesnake)).